The sequence spans 446 residues: NADH-ubiquinone oxidoreductase chain 4 (446 aa).

13 helical membrane passes run 4-24 (IIFF…YWMV), 56-76 (MLSY…LLAS), 93-113 (IIIL…FMFY), 114-134 (LFFE…GYQP), 139-159 (AGLY…IGIF), 182-202 (LLYF…LVHL), 218-238 (ILAG…ISFL), 245-265 (YSFV…LVCL), 272-292 (ALIA…LLTM), 297-317 (LCGS…LFCL), 330-350 (MLIN…WFLL), 373-393 (IVSW…FSAA), and 426-446 (LLHW…MLWL).

The protein belongs to the complex I subunit 4 family.

It is found in the mitochondrion membrane. The enzyme catalyses a ubiquinone + NADH + 5 H(+)(in) = a ubiquinol + NAD(+) + 4 H(+)(out). Core subunit of the mitochondrial membrane respiratory chain NADH dehydrogenase (Complex I) that is believed to belong to the minimal assembly required for catalysis. Complex I functions in the transfer of electrons from NADH to the respiratory chain. The immediate electron acceptor for the enzyme is believed to be ubiquinone. The protein is NADH-ubiquinone oxidoreductase chain 4 (mt:ND4) of Drosophila melanogaster (Fruit fly).